The primary structure comprises 270 residues: MFNFITFILFAVVCISYCHKSRGRRHFGDEYRINTPACDIVCEGQWKSEFHANFHKIYDTEYFEIPLDTAIVKNRANLKMFCSSTIQKYSCLRNECKIQRTPWSAEKHICVGHFDNFDRNINCLSLTDKYVQRECSNVCNSIKIEISQAEIDRMAEMDFSRQEKSEFVEQNKHCNVIACYQLCHEYIISKVCIDSAVAARSVVKSYYDSYLEREYTELNKDDQDELYSSFCRRVTPGQDENEFTANMTRYNNLTLDRMKNDIRSVFSILD.

The first 23 residues, 1–23, serve as a signal peptide directing secretion; sequence MFNFITFILFAVVCISYCHKSRG. 2 N-linked (GlcNAc...) asparagine glycosylation sites follow: Asn246 and Asn252.

Its subcellular location is the secreted. This is an uncharacterized protein from Caenorhabditis elegans.